Consider the following 208-residue polypeptide: Uracil phosphoribosyltransferase (208 aa).

5-phospho-alpha-D-ribose 1-diphosphate contacts are provided by residues Arg78, Arg103, and 130–138 (DPMLATANS). Residues Ile193 and 198-200 (GDA) each bind uracil. Asp199 provides a ligand contact to 5-phospho-alpha-D-ribose 1-diphosphate.

This sequence belongs to the UPRTase family. Requires Mg(2+) as cofactor.

It carries out the reaction UMP + diphosphate = 5-phospho-alpha-D-ribose 1-diphosphate + uracil. It functions in the pathway pyrimidine metabolism; UMP biosynthesis via salvage pathway; UMP from uracil: step 1/1. Allosterically activated by GTP. Functionally, catalyzes the conversion of uracil and 5-phospho-alpha-D-ribose 1-diphosphate (PRPP) to UMP and diphosphate. This Brucella melitensis biotype 2 (strain ATCC 23457) protein is Uracil phosphoribosyltransferase.